A 1361-amino-acid chain; its full sequence is Xanthine dehydrogenase 1 (1361 aa).

The 87-residue stretch at 15–101 (TEALLYVNGV…GMHVISIEGL (87 aa)) folds into the 2Fe-2S ferredoxin-type domain. [2Fe-2S] cluster is bound by residues Cys53, Cys58, Cys61, Cys83, Cys123, Cys126, Cys159, and Cys161. The region spanning 257 to 442 (RGNGGITWYR…LSVFLPWTRP (186 aa)) is the FAD-binding PCMH-type domain. Residues 285-292 (LLVGNTEV), Phe365, 375-379 (CIGGN), Asp388, Leu432, and Lys450 each bind FAD. Mo-molybdopterin-binding residues include Gln796 and Phe827. Substrate is bound by residues Glu831 and Arg909. Residue Arg941 participates in Mo-molybdopterin binding. Substrate contacts are provided by Phe943 and Thr1039. Ala1108 lines the Mo-molybdopterin pocket. Glu1297 acts as the Proton acceptor in catalysis.

Belongs to the xanthine dehydrogenase family. As to quaternary structure, homodimer. Requires [2Fe-2S] cluster as cofactor. It depends on FAD as a cofactor. Mo-molybdopterin is required as a cofactor. Expressed in roots, leaves, stems, flowers and siliques.

It catalyses the reaction xanthine + NAD(+) + H2O = urate + NADH + H(+). The catalysed reaction is hypoxanthine + NAD(+) + H2O = xanthine + NADH + H(+). Key enzyme involved in purine catabolism. Catalyzes the oxidation of hypoxanthine to xanthine and the oxidation of xanthine to urate. Regulates the level of ureides and plays an important role during plant growth and development, senescence and response to stresses. Possesses NADH oxidase activity and may contribute to the generation of superoxide anions in planta. The protein is Xanthine dehydrogenase 1 (XDH1) of Arabidopsis thaliana (Mouse-ear cress).